Here is a 129-residue protein sequence, read N- to C-terminus: Small ribosomal subunit protein uS11 (129 aa).

The protein belongs to the universal ribosomal protein uS11 family. Part of the 30S ribosomal subunit. Interacts with proteins S7 and S18. Binds to IF-3.

Its function is as follows. Located on the platform of the 30S subunit, it bridges several disparate RNA helices of the 16S rRNA. Forms part of the Shine-Dalgarno cleft in the 70S ribosome. In Salmonella newport (strain SL254), this protein is Small ribosomal subunit protein uS11.